Reading from the N-terminus, the 265-residue chain is Silencing boundary-establishment protein FUB1-like protein (265 aa).

The tract at residues 194-265 (HPENRSRNEQ…MPPGSSDMFM (72 aa)) is disordered.

This sequence belongs to the proteasome inhibitor PI31 family. As to quaternary structure, interacts with the 20S proteasome.

It localises to the cytoplasm. The protein localises to the nucleus. Its function is as follows. May play a role in the establishment of transcriptional silencing boundaries, preventing the propagation of heterochromatic silencing. The polypeptide is Silencing boundary-establishment protein FUB1-like protein (Schizosaccharomyces pombe (strain 972 / ATCC 24843) (Fission yeast)).